The following is a 256-amino-acid chain: Ribonuclease HII (256 aa).

Positions 67–255 constitute an RNase H type-2 domain; that stretch reads QLVGGVDEVG…VSEMVGLKKA (189 aa). Asp73, Glu74, and Asp165 together coordinate a divalent metal cation.

This sequence belongs to the RNase HII family. It depends on Mn(2+) as a cofactor. Mg(2+) serves as cofactor.

It localises to the cytoplasm. It catalyses the reaction Endonucleolytic cleavage to 5'-phosphomonoester.. Its function is as follows. Endonuclease that specifically degrades the RNA of RNA-DNA hybrids. In Lactobacillus delbrueckii subsp. bulgaricus (strain ATCC 11842 / DSM 20081 / BCRC 10696 / JCM 1002 / NBRC 13953 / NCIMB 11778 / NCTC 12712 / WDCM 00102 / Lb 14), this protein is Ribonuclease HII.